The following is a 354-amino-acid chain: Rhodopsin (354 aa).

Topologically, residues 1–36 (MNGTEGPNFYVPMSNKTGIVRSPFEYPQYYLAEPWK) are extracellular. Asparagine 2 and asparagine 15 each carry an N-linked (GlcNAc...) asparagine glycan. A helical transmembrane segment spans residues 37–61 (YSVLAAYMFLLILLGLPINFMTLYV). Residues 62–73 (TIQHKKLRTPLN) lie on the Cytoplasmic side of the membrane. Residues 74 to 96 (YILLNLAFANHFMVLCGFTITMY) traverse the membrane as a helical segment. Over 97–110 (TSLHGYFVFGQTGC) the chain is Extracellular. Residues cysteine 110 and cysteine 187 are joined by a disulfide bond. The helical transmembrane segment at 111–133 (YFEGFFATLGGEIALWSLVVLAI) threads the bilayer. The 'Ionic lock' involved in activated form stabilization signature appears at 134–136 (ERY). Over 134–152 (ERYIVVCKPMSNFRFGENH) the chain is Cytoplasmic. Residues 153 to 173 (AMMGVAFTWIMALACAVPPLF) traverse the membrane as a helical segment. At 174–202 (GWSRYIPEGMQCSCGVDYYTLKPEVNNES) the chain is on the extracellular side. The helical transmembrane segment at 203-224 (FVIYMFVVHFLIPLIIISFCYG) threads the bilayer. At 225–252 (RLVCTVKEAAAQQQESATTQKAEKEVTR) the chain is on the cytoplasmic side. Residues 253 to 274 (MVVIMVIFFLICWVPYAYVAFY) traverse the membrane as a helical segment. Over 275 to 286 (IFTHQGSEFGPI) the chain is Extracellular. A helical membrane pass occupies residues 287–308 (FMTVPAFFAKSSAIYNPVIYIM). The residue at position 296 (lysine 296) is an N6-(retinylidene)lysine. The Cytoplasmic portion of the chain corresponds to 309-354 (LNKQFRNCMITTLCCGKNPFGDEDASSAATSKTEATSVSTSQVSPA). 2 S-palmitoyl cysteine lipidation sites follow: cysteine 322 and cysteine 323. Residues 331–354 (EDASSAATSKTEATSVSTSQVSPA) form a disordered region. The segment covering 334-354 (SSAATSKTEATSVSTSQVSPA) has biased composition (low complexity).

It belongs to the G-protein coupled receptor 1 family. Opsin subfamily. In terms of processing, contains one covalently linked retinal chromophore. Upon light absorption, the covalently bound 11-cis-retinal is converted to all-trans-retinal. After hydrolysis of the Schiff base and release of the covalently bound all-trans-retinal, active rhodopsin is regenerated by binding of a fresh molecule of 11-cis-retinal. In terms of tissue distribution, retina. Localized in the ventral part of the retina.

It localises to the membrane. The protein resides in the cell projection. Its subcellular location is the cilium. It is found in the photoreceptor outer segment. Its function is as follows. Photoreceptor required for image-forming vision at low light intensity. Required for photoreceptor cell viability after birth. May use a mixture of retinal and 3-dehydroretinal as visual pigment. Light-induced isomerization of 11-cis to all-trans retinal triggers a conformational change that activates signaling via G-proteins. Subsequent receptor phosphorylation mediates displacement of the bound G-protein alpha subunit by arrestin and terminates signaling. The polypeptide is Rhodopsin (RHO) (Aquarana catesbeiana (American bullfrog)).